A 1058-amino-acid polypeptide reads, in one-letter code: Carbamoyl phosphate synthase large chain (1058 aa).

Positions 1–399 (MPIDKDIKKV…AIQKAIRSLD (399 aa)) are carboxyphosphate synthetic domain. Positions 127, 167, 173, 174, 206, 208, 213, 239, 240, 241, 282, and 296 each coordinate ATP. The region spanning 131–325 (GHFMDKLNEP…IAKISSKIAL (195 aa)) is the ATP-grasp 1 domain. Mg(2+) contacts are provided by Gln282, Glu296, and Asn298. Mn(2+)-binding residues include Gln282, Glu296, and Asn298. The interval 400 to 538 (MGHDGFEYVE…YSTYDSGNEL (139 aa)) is oligomerization domain. Positions 539-924 (KSSNKKKIVI…YKSQLAAGMD (386 aa)) are carbamoyl phosphate synthetic domain. Residues 663–856 (AKLLNKLHIH…LAKVATWIMT (194 aa)) form the ATP-grasp 2 domain. Residues Arg699, Lys738, Leu740, Glu745, Gly770, Val771, His772, Ser773, Gln813, and Glu827 each coordinate ATP. 3 residues coordinate Mg(2+): Gln813, Glu827, and Asn829. Residues Gln813, Glu827, and Asn829 each coordinate Mn(2+). Positions 923 to 1058 (MDLPKEGKIF…KSLNEHIDGE (136 aa)) constitute an MGS-like domain. The tract at residues 925 to 1058 (LPKEGKIFIS…KSLNEHIDGE (134 aa)) is allosteric domain.

This sequence belongs to the CarB family. Composed of two chains; the small (or glutamine) chain promotes the hydrolysis of glutamine to ammonia, which is used by the large (or ammonia) chain to synthesize carbamoyl phosphate. Tetramer of heterodimers (alpha,beta)4. It depends on Mg(2+) as a cofactor. Mn(2+) is required as a cofactor.

The catalysed reaction is hydrogencarbonate + L-glutamine + 2 ATP + H2O = carbamoyl phosphate + L-glutamate + 2 ADP + phosphate + 2 H(+). The enzyme catalyses hydrogencarbonate + NH4(+) + 2 ATP = carbamoyl phosphate + 2 ADP + phosphate + 2 H(+). It functions in the pathway amino-acid biosynthesis; L-arginine biosynthesis; carbamoyl phosphate from bicarbonate: step 1/1. It participates in pyrimidine metabolism; UMP biosynthesis via de novo pathway; (S)-dihydroorotate from bicarbonate: step 1/3. Functionally, large subunit of the glutamine-dependent carbamoyl phosphate synthetase (CPSase). CPSase catalyzes the formation of carbamoyl phosphate from the ammonia moiety of glutamine, carbonate, and phosphate donated by ATP, constituting the first step of 2 biosynthetic pathways, one leading to arginine and/or urea and the other to pyrimidine nucleotides. The large subunit (synthetase) binds the substrates ammonia (free or transferred from glutamine from the small subunit), hydrogencarbonate and ATP and carries out an ATP-coupled ligase reaction, activating hydrogencarbonate by forming carboxy phosphate which reacts with ammonia to form carbamoyl phosphate. This chain is Carbamoyl phosphate synthase large chain, found in Methanobrevibacter smithii (strain ATCC 35061 / DSM 861 / OCM 144 / PS).